A 261-amino-acid polypeptide reads, in one-letter code: X-box-binding protein 1 (261 aa).

The Cytoplasmic portion of the chain corresponds to 1-185; the sequence is MVVVAAAPNP…VQAQLSPLQN (185 aa). A disordered region spans residues 44–93; sequence RGASPEAASGGLPQARKRQRLTHLSPEEKALRRKLKNRVAAQTARDRKKA. Phosphoserine occurs at positions 47 and 68. The bZIP domain occupies 70–133; sequence EEKALRRKLK…HGLVVENQEL (64 aa). The basic motif stretch occupies residues 72-94; sequence KALRRKLKNRVAAQTARDRKKAR. Residues 75-92 are nuclear localization signal (NLS); in isoforms 1 and isoform 2; sequence RRKLKNRVAAQTARDRKK. Residues 98–133 are leucine-zipper; sequence LEQQVVDLEEENQKLLLENQLLREKTHGLVVENQEL. Residues 186–203 form a helical; Signal-anchor for type II membrane protein membrane-spanning segment; it reads ISPWILAVLTLQIQSLIS. The Lumenal portion of the chain corresponds to 204–261; sequence CWAFWTTWTQSCSSNALPQSLPAWRSSQRSTQKDPVPYQPPFLCQWGRHQPSWKPLMN. The interval 235–261 is necessary for the translational pausing of its own mRNA; it reads QKDPVPYQPPFLCQWGRHQPSWKPLMN.

It belongs to the bZIP family. In terms of assembly, isoform 2 interacts with SIRT1. Isoform 2 interacts with PIK3R1 and PIK3R2; the interactions are direct and induce translocation of XBP1 isoform 2 into the nucleus and the unfolded protein response (UPR) XBP1-dependent target genes activation in a ER stress- and/or insulin-dependent but PI3K-independent manner. Isoform 2 interacts with FOXO1; the interaction is direct and leads to FOXO1 ubiquitination and degradation via the proteasome pathway in hepatocytes. Isoform 1 interacts with HM13. Isoform 1 interacts with RNF139; the interaction induces ubiquitination and degradation of isoform 1. Isoform 1 interacts (via luminal domain) with DERL1; the interaction obviates the need for ectodomain shedding prior HM13/SPP-mediated XBP1 isoform 1 cleavage. Isoform 1 interacts with isoform 2; the interaction sequesters isoform 2 from the nucleus and enhances isoform 2 degradation in the cytoplasm. Isoform 1 interacts with HDAC3 and AKT1; the interactions occur in endothelial cell (EC) under disturbed flow. Isoform 1 interacts with the oncoprotein FOS. Isoform 2 interacts with ATF6; the interaction occurs in a ER stress-dependent manner and is required for DNA binding to the unfolded protein response element (UPRE). Isoform 2 interacts with PIK3R1; the interaction is direct and induces translocation of XBP1 isoform 2 into the nucleus and the unfolded protein response (UPR) XBP1-dependent target genes activation in a ER stress- and/or insulin-dependent but PI3K-independent manner. In terms of processing, acetylated by EP300; acetylation positively regulates the transcriptional activity of XBP1 isoform 2. Isoform 2 is deacetylated by SIRT1; deacetylation negatively regulates the transcriptional activity of XBP1 isoform 2. Post-translationally, ubiquitinated, leading to proteasome-mediated degradation in response to ER stress. X-box-binding protein 1, cytoplasmic form and luminal form are produced by intramembrane proteolytic cleavage of ER membrane-anchored isoform 1 triggered by HM13/SPP in a DERL1-RNF139-dependent and VCP/p97-independent manner. X-box-binding protein 1, luminal form is ubiquitinated leading to proteasomal degradation. In terms of tissue distribution, expressed in plasma cells in rheumatoid synovium. Over-expressed in primary breast cancer and metastatic breast cancer cells. Isoform 1 and isoform 2 are expressed at higher level in proliferating as compared to confluent quiescent endothelial cells.

The protein resides in the endoplasmic reticulum. It is found in the nucleus. The protein localises to the cytoplasm. It localises to the endoplasmic reticulum membrane. Its subcellular location is the membrane. Its function is as follows. Functions as a transcription factor during endoplasmic reticulum (ER) stress by regulating the unfolded protein response (UPR). Required for cardiac myogenesis and hepatogenesis during embryonic development, and the development of secretory tissues such as exocrine pancreas and salivary gland. Involved in terminal differentiation of B lymphocytes to plasma cells and production of immunoglobulins. Modulates the cellular response to ER stress in a PIK3R-dependent manner. Binds to the cis-acting X box present in the promoter regions of major histocompatibility complex class II genes. Involved in VEGF-induced endothelial cell (EC) proliferation and retinal blood vessel formation during embryonic development but also for angiogenesis in adult tissues under ischemic conditions. Also functions as a major regulator of the UPR in obesity-induced insulin resistance and type 2 diabetes for the management of obesity and diabetes prevention. Plays a role in the unconventional cytoplasmic splicing processing of its own mRNA triggered by the endoplasmic reticulum (ER) transmembrane endoribonuclease ERN1: upon ER stress, the emerging XBP1 polypeptide chain, as part of a mRNA-ribosome-nascent chain (R-RNC) complex, cotranslationally recruits its own unprocessed mRNA through transient docking to the ER membrane and translational pausing, therefore facilitating efficient IRE1-mediated XBP1 mRNA isoform 2 production. In endothelial cells (EC), associated with KDR, promotes IRE1-mediated XBP1 mRNA isoform 2 productions in a vascular endothelial growth factor (VEGF)-dependent manner, leading to EC proliferation and angiogenesis. Functions as a negative feed-back regulator of the potent transcription factor XBP1 isoform 2 protein levels through proteasome-mediated degradation, thus preventing the constitutive activation of the ER stress response signaling pathway. Inhibits the transactivation activity of XBP1 isoform 2 in myeloma cells. Acts as a weak transcriptional factor. Together with HDAC3, contributes to the activation of NFE2L2-mediated HMOX1 transcription factor gene expression in a PI(3)K/mTORC2/Akt-dependent signaling pathway leading to EC survival under disturbed flow/oxidative stress. Binds to the ER stress response element (ERSE) upon ER stress. Binds to the consensus 5'-GATGACGTG[TG]N(3)[AT]T-3' sequence related to cAMP responsive element (CRE)-like sequences. Binds the Tax-responsive element (TRE) present in the long terminal repeat (LTR) of T-cell leukemia virus type 1 (HTLV-I) and to the TPA response elements (TRE). Associates preferentially to the HDAC3 gene promoter region in a static flow-dependent manner. Binds to the CDH5/VE-cadherin gene promoter region. Functionally, functions as a stress-inducible potent transcriptional activator during endoplasmic reticulum (ER) stress by inducing unfolded protein response (UPR) target genes via binding to the UPR element (UPRE). Up-regulates target genes encoding ER chaperones and ER-associated degradation (ERAD) components to enhance the capacity of productive folding and degradation mechanism, respectively, in order to maintain the homeostasis of the ER under ER stress. Plays a role in the production of immunoglobulins and interleukin-6 in the presence of stimuli required for plasma cell differentiation. Induces phospholipid biosynthesis and ER expansion. Contributes to the VEGF-induced endothelial cell (EC) growth and proliferation in a Akt/GSK-dependent and/or -independent signaling pathway, respectively, leading to beta-catenin nuclear translocation and E2F2 gene expression. Promotes umbilical vein EC apoptosis and atherosclerotisis development in a caspase-dependent signaling pathway, and contributes to VEGF-induced EC proliferation and angiogenesis in adult tissues under ischemic conditions. Involved in the regulation of endostatin-induced autophagy in EC through BECN1 transcriptional activation. Plays a role as an oncogene by promoting tumor progression: stimulates zinc finger protein SNAI1 transcription to induce epithelial-to-mesenchymal (EMT) transition, cell migration and invasion of breast cancer cells. Involved in adipocyte differentiation by regulating lipogenic gene expression during lactation. Plays a role in the survival of both dopaminergic neurons of the substantia nigra pars compacta (SNpc), by maintaining protein homeostasis and of myeloma cells. Increases insulin sensitivity in the liver as a response to a high carbohydrate diet, resulting in improved glucose tolerance. Also improves glucose homeostasis in an ER stress- and/or insulin-independent manner through both binding and proteasome-induced degradation of the transcription factor FOXO1, hence resulting in suppression of gluconeogenic genes expression and in a reduction of blood glucose levels. Controls the induction of de novo fatty acid synthesis in hepatocytes by regulating the expression of a subset of lipogenic genes in an ER stress- and UPR-independent manner. Associates preferentially to the HDAC3 gene promoter region in a disturbed flow-dependent manner. Binds to the BECN1 gene promoter region. Binds to the CDH5/VE-cadherin gene promoter region. Binds to the ER stress response element (ERSE) upon ER stress. Binds to the 5'-CCACG-3' motif in the PPARG promoter. This is X-box-binding protein 1 from Homo sapiens (Human).